We begin with the raw amino-acid sequence, 304 residues long: UDP-N-acetylenolpyruvoylglucosamine reductase (304 aa).

Residues 31 to 196 enclose the FAD-binding PCMH-type domain; it reads KVGGPADYLA…ISAKFNLKPG (166 aa). The active site involves arginine 175. Serine 225 functions as the Proton donor in the catalytic mechanism. Residue glutamate 295 is part of the active site.

The protein belongs to the MurB family. The cofactor is FAD.

The protein resides in the cytoplasm. It carries out the reaction UDP-N-acetyl-alpha-D-muramate + NADP(+) = UDP-N-acetyl-3-O-(1-carboxyvinyl)-alpha-D-glucosamine + NADPH + H(+). Its pathway is cell wall biogenesis; peptidoglycan biosynthesis. In terms of biological role, cell wall formation. The protein is UDP-N-acetylenolpyruvoylglucosamine reductase of Streptococcus thermophilus (strain ATCC BAA-491 / LMD-9).